Here is a 328-residue protein sequence, read N- to C-terminus: Glycerol-3-phosphate dehydrogenase [NAD(P)+] (328 aa).

The NADPH site is built by tryptophan 11, arginine 30, and lysine 103. Residues lysine 103, glycine 132, and serine 134 each coordinate sn-glycerol 3-phosphate. Alanine 136 is an NADPH binding site. Residues lysine 187, aspartate 240, serine 250, arginine 251, and asparagine 252 each coordinate sn-glycerol 3-phosphate. Catalysis depends on lysine 187, which acts as the Proton acceptor. An NADPH-binding site is contributed by arginine 251. 2 residues coordinate NADPH: valine 275 and glutamate 277.

Belongs to the NAD-dependent glycerol-3-phosphate dehydrogenase family.

It localises to the cytoplasm. It catalyses the reaction sn-glycerol 3-phosphate + NAD(+) = dihydroxyacetone phosphate + NADH + H(+). The enzyme catalyses sn-glycerol 3-phosphate + NADP(+) = dihydroxyacetone phosphate + NADPH + H(+). It participates in membrane lipid metabolism; glycerophospholipid metabolism. Functionally, catalyzes the reduction of the glycolytic intermediate dihydroxyacetone phosphate (DHAP) to sn-glycerol 3-phosphate (G3P), the key precursor for phospholipid synthesis. The chain is Glycerol-3-phosphate dehydrogenase [NAD(P)+] from Thiobacillus denitrificans (strain ATCC 25259 / T1).